We begin with the raw amino-acid sequence, 618 residues long: DNA mismatch repair protein MutL (618 aa).

Residues 367-381 (EPTAAREPATPRYSG) are compositionally biased toward low complexity. Residues 367-402 (EPTAAREPATPRYSGGASGGNGGRQSAGGWPHAQPG) are disordered. Residues 382–392 (GASGGNGGRQS) are compositionally biased toward gly residues.

This sequence belongs to the DNA mismatch repair MutL/HexB family.

This protein is involved in the repair of mismatches in DNA. It is required for dam-dependent methyl-directed DNA mismatch repair. May act as a 'molecular matchmaker', a protein that promotes the formation of a stable complex between two or more DNA-binding proteins in an ATP-dependent manner without itself being part of a final effector complex. This chain is DNA mismatch repair protein MutL, found in Salmonella dublin (strain CT_02021853).